The sequence spans 308 residues: Protoheme IX farnesyltransferase (308 aa).

The next 9 membrane-spanning stretches (helical) occupy residues 20-40 (VLAY…VTAI), 53-73 (PLLI…ANTF), 102-122 (NALV…WWTT), 124-144 (LLSG…YTLL), 149-169 (TSQN…IGWS), 170-190 (AITD…FFWT), 227-249 (LIYT…WLYM), 254-276 (VAGA…GEPV), and 288-308 (YLAV…PTLF).

This sequence belongs to the UbiA prenyltransferase family. Protoheme IX farnesyltransferase subfamily.

Its subcellular location is the cell membrane. The enzyme catalyses heme b + (2E,6E)-farnesyl diphosphate + H2O = Fe(II)-heme o + diphosphate. The protein operates within porphyrin-containing compound metabolism; heme O biosynthesis; heme O from protoheme: step 1/1. In terms of biological role, converts heme B (protoheme IX) to heme O by substitution of the vinyl group on carbon 2 of heme B porphyrin ring with a hydroxyethyl farnesyl side group. The sequence is that of Protoheme IX farnesyltransferase from Mycobacterium leprae (strain TN).